Reading from the N-terminus, the 75-residue chain is Porwaprin-b (75 aa).

Residues 1–24 (MSSGGLLLLLGLLTLWAELTPVSG) form the signal peptide. A WAP domain is found at 27–72 (RPVKPGLCPPRPQKPPCVKECKNDWSCRGEQKCCHYGCIYECRDPI). Intrachain disulfides connect Cys-34/Cys-60, Cys-43/Cys-64, Cys-47/Cys-59, and Cys-53/Cys-68.

This sequence belongs to the venom waprin family. Expressed by the venom gland.

The protein localises to the secreted. In terms of biological role, damages membranes of susceptible bacteria. Has no hemolytic activity. Not toxic to mice. Does not inhibit the proteinases elastase and cathepsin G. This chain is Porwaprin-b, found in Pseudechis porphyriacus (Red-bellied black snake).